A 197-amino-acid polypeptide reads, in one-letter code: ADP-ribosylation factor 1 (197 aa).

Gly-2 carries the N-myristoyl glycine lipid modification. Residues Gly-24–Thr-31, Asp-67–Gln-71, and Asn-126–Asp-129 contribute to the GTP site.

Belongs to the small GTPase superfamily. Arf family.

It is found in the golgi apparatus. The enzyme catalyses GTP + H2O = GDP + phosphate + H(+). Functionally, GTP-binding protein involved in protein trafficking; may modulate vesicle budding and uncoating within the Golgi apparatus. This Solanum tuberosum (Potato) protein is ADP-ribosylation factor 1.